We begin with the raw amino-acid sequence, 99 residues long: Large ribosomal subunit protein bL27 (99 aa).

A propeptide spanning residues 1 to 12 (MMINNLEALKLF) is cleaved from the precursor. Positions 15 to 36 (HKGGGSTANGRNSAGRRLGAKR) are disordered.

This sequence belongs to the bacterial ribosomal protein bL27 family. In terms of processing, the N-terminus is cleaved by ribosomal processing cysteine protease Prp.

This is Large ribosomal subunit protein bL27 from Lactobacillus johnsonii (strain CNCM I-12250 / La1 / NCC 533).